The chain runs to 512 residues: D-alanine--D-alanyl carrier protein ligase (512 aa).

Position 152–153 (152–153 (TS)) interacts with ATP. D199 contributes to the D-alanine binding site. 294–299 (NAYGPT) lines the ATP pocket. V303 provides a ligand contact to D-alanine. ATP-binding positions include D385, 397–400 (YGGR), and K499. K499 is a D-alanine binding site.

It belongs to the ATP-dependent AMP-binding enzyme family. DltA subfamily.

It is found in the cytoplasm. The enzyme catalyses holo-[D-alanyl-carrier protein] + D-alanine + ATP = D-alanyl-[D-alanyl-carrier protein] + AMP + diphosphate. Its pathway is cell wall biogenesis; lipoteichoic acid biosynthesis. Functionally, catalyzes the first step in the D-alanylation of lipoteichoic acid (LTA), the activation of D-alanine and its transfer onto the D-alanyl carrier protein (Dcp) DltC. In an ATP-dependent two-step reaction, forms a high energy D-alanyl-AMP intermediate, followed by transfer of the D-alanyl residue as a thiol ester to the phosphopantheinyl prosthetic group of the Dcp. D-alanylation of LTA plays an important role in modulating the properties of the cell wall in Gram-positive bacteria, influencing the net charge of the cell wall. The polypeptide is D-alanine--D-alanyl carrier protein ligase (Streptococcus pyogenes serotype M1).